Consider the following 359-residue polypeptide: Putative plant UBX domain-containing protein 15 (359 aa).

Residues 277–357 (DRSVVCSISV…GIANSIISVT (81 aa)) form the UBX domain.

This is Putative plant UBX domain-containing protein 15 from Arabidopsis thaliana (Mouse-ear cress).